The sequence spans 85 residues: MRLHFNTSNGIFSVRREDRSTAVASERNAKLPLIGSVVPLSPRVHLLITRGEFIKAMNKERPHLEAVVTYWPRIRLFVKLIKEVL.

This is an uncharacterized protein from Enterobacteria phage T3 (Bacteriophage T3).